The chain runs to 443 residues: Xaa-Pro dipeptidase (443 aa).

Residues Asp246, Asp257, His339, Glu384, and Glu423 each contribute to the Mn(2+) site.

This sequence belongs to the peptidase M24B family. Bacterial-type prolidase subfamily. It depends on Mn(2+) as a cofactor.

It carries out the reaction Xaa-L-Pro dipeptide + H2O = an L-alpha-amino acid + L-proline. Splits dipeptides with a prolyl residue in the C-terminal position. In Shigella boydii serotype 18 (strain CDC 3083-94 / BS512), this protein is Xaa-Pro dipeptidase.